Consider the following 147-residue polypeptide: Deoxyuridine 5'-triphosphate nucleotidohydrolase (147 aa).

Residue Arg24 participates in Mg(2+) binding. DUTP-binding positions include 68 to 70, 82 to 85, Tyr88, Gly93, Ile95, and Arg111; these read PRS and GVID.

It belongs to the dUTPase family. It depends on Mg(2+) as a cofactor.

It catalyses the reaction dUTP + H2O = dUMP + diphosphate + H(+). Functionally, this enzyme is involved in nucleotide metabolism: it produces dUMP, the immediate precursor of thymidine nucleotides and it decreases the intracellular concentration of dUTP so that uracil cannot be incorporated into DNA. This Bos taurus (Bovine) protein is Deoxyuridine 5'-triphosphate nucleotidohydrolase (OPG046).